The following is a 533-amino-acid chain: 2-isopropylmalate synthase (533 aa).

The Pyruvate carboxyltransferase domain maps to 8–269 (ILIFDTTLRD…YFNPFLGRPA (262 aa)). Residues aspartate 17, histidine 208, histidine 210, and asparagine 244 each coordinate Mn(2+). Residues 408–533 (RLERVQVSCG…REHPPVVASL (126 aa)) form a regulatory domain region.

It belongs to the alpha-IPM synthase/homocitrate synthase family. LeuA type 1 subfamily. As to quaternary structure, homodimer. Mn(2+) serves as cofactor.

It is found in the cytoplasm. It carries out the reaction 3-methyl-2-oxobutanoate + acetyl-CoA + H2O = (2S)-2-isopropylmalate + CoA + H(+). It participates in amino-acid biosynthesis; L-leucine biosynthesis; L-leucine from 3-methyl-2-oxobutanoate: step 1/4. In terms of biological role, catalyzes the condensation of the acetyl group of acetyl-CoA with 3-methyl-2-oxobutanoate (2-ketoisovalerate) to form 3-carboxy-3-hydroxy-4-methylpentanoate (2-isopropylmalate). This chain is 2-isopropylmalate synthase, found in Synechocystis sp. (strain ATCC 27184 / PCC 6803 / Kazusa).